A 183-amino-acid polypeptide reads, in one-letter code: Apo-citrate lyase phosphoribosyl-dephospho-CoA transferase (183 aa).

It belongs to the CitX family.

The enzyme catalyses apo-[citrate lyase ACP] + 2'-(5''-triphospho-alpha-D-ribosyl)-3'-dephospho-CoA = holo-[citrate lyase ACP] + diphosphate. Its function is as follows. Transfers 2-(5''-triphosphoribosyl)-3'-dephosphocoenzyme-A on a serine residue to the apo-acyl carrier protein (gamma chain) of the citrate lyase to yield holo-acyl carrier protein. The sequence is that of Apo-citrate lyase phosphoribosyl-dephospho-CoA transferase from Shigella flexneri serotype 5b (strain 8401).